The following is a 245-amino-acid chain: Ribonuclease 3 (245 aa).

Residues Tyr-24–Gly-146 enclose the RNase III domain. Glu-59 is a Mg(2+) binding site. Asp-63 is a catalytic residue. Positions 132 and 135 each coordinate Mg(2+). Glu-135 is a catalytic residue. In terms of domain architecture, DRBM spans Asp-173–Val-243.

Belongs to the ribonuclease III family. As to quaternary structure, homodimer. Mg(2+) is required as a cofactor.

It is found in the cytoplasm. The catalysed reaction is Endonucleolytic cleavage to 5'-phosphomonoester.. Digests double-stranded RNA. Involved in the processing of primary rRNA transcript to yield the immediate precursors to the large and small rRNAs (23S and 16S). Processes some mRNAs, and tRNAs when they are encoded in the rRNA operon. Processes pre-crRNA and tracrRNA of type II CRISPR loci if present in the organism. This is Ribonuclease 3 from Nitrosomonas europaea (strain ATCC 19718 / CIP 103999 / KCTC 2705 / NBRC 14298).